The chain runs to 342 residues: S-adenosylmethionine:tRNA ribosyltransferase-isomerase (342 aa).

The protein belongs to the QueA family. Monomer.

Its subcellular location is the cytoplasm. It carries out the reaction 7-aminomethyl-7-carbaguanosine(34) in tRNA + S-adenosyl-L-methionine = epoxyqueuosine(34) in tRNA + adenine + L-methionine + 2 H(+). It participates in tRNA modification; tRNA-queuosine biosynthesis. Functionally, transfers and isomerizes the ribose moiety from AdoMet to the 7-aminomethyl group of 7-deazaguanine (preQ1-tRNA) to give epoxyqueuosine (oQ-tRNA). This chain is S-adenosylmethionine:tRNA ribosyltransferase-isomerase, found in Sulfurimonas denitrificans (strain ATCC 33889 / DSM 1251) (Thiomicrospira denitrificans (strain ATCC 33889 / DSM 1251)).